A 292-amino-acid polypeptide reads, in one-letter code: Elongation factor Ts (292 aa).

The interval 80–83 (TDFV) is involved in Mg(2+) ion dislocation from EF-Tu.

This sequence belongs to the EF-Ts family.

It is found in the cytoplasm. Functionally, associates with the EF-Tu.GDP complex and induces the exchange of GDP to GTP. It remains bound to the aminoacyl-tRNA.EF-Tu.GTP complex up to the GTP hydrolysis stage on the ribosome. This is Elongation factor Ts from Tolumonas auensis (strain DSM 9187 / NBRC 110442 / TA 4).